The primary structure comprises 644 residues: Exoribonuclease 2 (644 aa).

An RNB domain is found at 189–516 (RQDLTALNFV…NHRLLKAVIK (328 aa)). Residues 561 to 643 (NTRFAAEIID…ETRSIIARPA (83 aa)) form the S1 motif domain.

This sequence belongs to the RNR ribonuclease family. RNase II subfamily.

It localises to the cytoplasm. It catalyses the reaction Exonucleolytic cleavage in the 3'- to 5'-direction to yield nucleoside 5'-phosphates.. Its function is as follows. Involved in mRNA degradation. Hydrolyzes single-stranded polyribonucleotides processively in the 3' to 5' direction. This chain is Exoribonuclease 2, found in Salmonella newport (strain SL254).